We begin with the raw amino-acid sequence, 454 residues long: tRNA modification GTPase MnmE (454 aa).

Residues arginine 23, glutamate 80, and lysine 120 each contribute to the (6S)-5-formyl-5,6,7,8-tetrahydrofolate site. Residues 216–377 (GMKVVIAGRP…LRNNLKQSMG (162 aa)) enclose the TrmE-type G domain. K(+) is bound at residue asparagine 226. GTP contacts are provided by residues 226 to 231 (NAGKSS), 245 to 251 (TDIAGTT), 270 to 273 (DTAG), 335 to 338 (NKAD), and 358 to 360 (SAR). Serine 230 provides a ligand contact to Mg(2+). Residues threonine 245, isoleucine 247, and threonine 250 each contribute to the K(+) site. Threonine 251 is a binding site for Mg(2+). Lysine 454 serves as a coordination point for (6S)-5-formyl-5,6,7,8-tetrahydrofolate.

This sequence belongs to the TRAFAC class TrmE-Era-EngA-EngB-Septin-like GTPase superfamily. TrmE GTPase family. In terms of assembly, homodimer. Heterotetramer of two MnmE and two MnmG subunits. It depends on K(+) as a cofactor.

It localises to the cytoplasm. In terms of biological role, exhibits a very high intrinsic GTPase hydrolysis rate. Involved in the addition of a carboxymethylaminomethyl (cmnm) group at the wobble position (U34) of certain tRNAs, forming tRNA-cmnm(5)s(2)U34. This is tRNA modification GTPase MnmE from Salmonella paratyphi A (strain AKU_12601).